A 412-amino-acid polypeptide reads, in one-letter code: Adenosine receptor A2a (412 aa).

Topologically, residues methionine 1–serine 7 are extracellular. Residues valine 8 to tryptophan 32 traverse the membrane as a helical segment. Over leucine 33–asparagine 42 the chain is Cytoplasmic. A helical transmembrane segment spans residues tyrosine 43–isoleucine 66. The Extracellular segment spans residues serine 67–cysteine 77. 3 cysteine pairs are disulfide-bonded: cysteine 71–cysteine 159, cysteine 74–cysteine 146, and cysteine 77–cysteine 166. A helical membrane pass occupies residues leucine 78–isoleucine 100. Over aspartate 101–arginine 120 the chain is Cytoplasmic. The chain crosses the membrane as a helical span at residues alanine 121–tryptophan 143. Residues asparagine 144 to proline 173 are Extracellular-facing. N-linked (GlcNAc...) asparagine glycosylation is present at asparagine 154. Glutamate 169 is an adenosine binding site. A helical transmembrane segment spans residues methionine 174–leucine 198. Topologically, residues arginine 199 to serine 234 are cytoplasmic. Residues leucine 235–phenylalanine 258 form a helical membrane-spanning segment. Asparagine 253 is a binding site for adenosine. Cysteine 259 and cysteine 262 are oxidised to a cystine. Residues cysteine 259–proline 266 lie on the Extracellular side of the membrane. A helical membrane pass occupies residues leucine 267 to tyrosine 290. Serine 277 and histidine 278 together coordinate adenosine. Over arginine 291 to serine 412 the chain is Cytoplasmic. The segment at lysine 391–serine 412 is disordered.

It belongs to the G-protein coupled receptor 1 family. As to quaternary structure, interacts (via cytoplasmic C-terminal domain) with USP4; the interaction is direct. May interact with DRD4. Interacts with NECAB2. Interacts (via cytoplasmic C-terminal domain) with GAS2L2; interaction enhances receptor-mediated adenylyl cyclase activity. Post-translationally, ubiquitinated. Deubiquitinated by USP4; leading to stabilization and expression at the cell surface.

It localises to the cell membrane. Receptor for adenosine. The activity of this receptor is mediated by G proteins which activate adenylyl cyclase. This Homo sapiens (Human) protein is Adenosine receptor A2a (ADORA2A).